Reading from the N-terminus, the 254-residue chain is Imidazole glycerol phosphate synthase subunit HisF (254 aa).

Active-site residues include Asp12 and Asp131.

This sequence belongs to the HisA/HisF family. In terms of assembly, heterodimer of HisH and HisF.

The protein localises to the cytoplasm. The catalysed reaction is 5-[(5-phospho-1-deoxy-D-ribulos-1-ylimino)methylamino]-1-(5-phospho-beta-D-ribosyl)imidazole-4-carboxamide + L-glutamine = D-erythro-1-(imidazol-4-yl)glycerol 3-phosphate + 5-amino-1-(5-phospho-beta-D-ribosyl)imidazole-4-carboxamide + L-glutamate + H(+). The protein operates within amino-acid biosynthesis; L-histidine biosynthesis; L-histidine from 5-phospho-alpha-D-ribose 1-diphosphate: step 5/9. Its function is as follows. IGPS catalyzes the conversion of PRFAR and glutamine to IGP, AICAR and glutamate. The HisF subunit catalyzes the cyclization activity that produces IGP and AICAR from PRFAR using the ammonia provided by the HisH subunit. This Frankia casuarinae (strain DSM 45818 / CECT 9043 / HFP020203 / CcI3) protein is Imidazole glycerol phosphate synthase subunit HisF.